A 447-amino-acid chain; its full sequence is Tubulin beta-4 chain (447 aa).

Gln11, Glu69, Ser138, Gly142, Thr143, Gly144, Asn204, and Asn226 together coordinate GTP. Glu69 contacts Mg(2+). Positions 423–447 (QQYQDATADEEGEYEDEEQQEADDM) are disordered. Residues 429–447 (TADEEGEYEDEEQQEADDM) show a composition bias toward acidic residues.

It belongs to the tubulin family. As to quaternary structure, dimer of alpha and beta chains. A typical microtubule is a hollow water-filled tube with an outer diameter of 25 nm and an inner diameter of 15 nM. Alpha-beta heterodimers associate head-to-tail to form protofilaments running lengthwise along the microtubule wall with the beta-tubulin subunit facing the microtubule plus end conferring a structural polarity. Microtubules usually have 13 protofilaments but different protofilament numbers can be found in some organisms and specialized cells. Requires Mg(2+) as cofactor. In terms of tissue distribution, expressed in roots and leaf sheaths.

The protein resides in the cytoplasm. The protein localises to the cytoskeleton. Its function is as follows. Tubulin is the major constituent of microtubules, a cylinder consisting of laterally associated linear protofilaments composed of alpha- and beta-tubulin heterodimers. Microtubules grow by the addition of GTP-tubulin dimers to the microtubule end, where a stabilizing cap forms. Below the cap, tubulin dimers are in GDP-bound state, owing to GTPase activity of alpha-tubulin. This is Tubulin beta-4 chain (TUBB4) from Oryza sativa subsp. japonica (Rice).